Here is a 185-residue protein sequence, read N- to C-terminus: Large ribosomal subunit protein uL22 (185 aa).

The protein belongs to the universal ribosomal protein uL22 family. In terms of assembly, part of the 50S ribosomal subunit.

Its function is as follows. This protein binds specifically to 23S rRNA. It makes multiple contacts with different domains of the 23S rRNA in the assembled 50S subunit and ribosome. Functionally, the globular domain of the protein is located near the polypeptide exit tunnel on the outside of the subunit, while an extended beta-hairpin is found that lines the wall of the exit tunnel in the center of the 70S ribosome. This chain is Large ribosomal subunit protein uL22, found in Caldivirga maquilingensis (strain ATCC 700844 / DSM 13496 / JCM 10307 / IC-167).